Here is a 431-residue protein sequence, read N- to C-terminus: C4-dicarboxylate transport protein (431 aa).

8 helical membrane passes run 8-28, 44-64, 78-98, 148-168, 188-208, 222-242, 307-327, and 355-375; these read ILYVQVLFAIFVGILLGHFWP, LIKMIIGPIIFCTVVTGIAGM, LLYFEIVSTFALLIGLGAAHL, GDILQILLVSLFFGAALAAIG, IVHVITKVAPIGAFGAMAFTI, LIGTFYFTAIVFVVFVLGAIA, IYMTMAVIFIAQATGIELTLL, and AATLAVVPTIPVAGMVLILGI.

Belongs to the dicarboxylate/amino acid:cation symporter (DAACS) (TC 2.A.23) family.

It is found in the cell inner membrane. Responsible for the transport of dicarboxylates such as succinate, fumarate, and malate from the periplasm across the membrane. The sequence is that of C4-dicarboxylate transport protein from Cupriavidus pinatubonensis (strain JMP 134 / LMG 1197) (Cupriavidus necator (strain JMP 134)).